The chain runs to 286 residues: Glycine--tRNA ligase alpha subunit (286 aa).

This sequence belongs to the class-II aminoacyl-tRNA synthetase family. In terms of assembly, tetramer of two alpha and two beta subunits.

It is found in the cytoplasm. The catalysed reaction is tRNA(Gly) + glycine + ATP = glycyl-tRNA(Gly) + AMP + diphosphate. The sequence is that of Glycine--tRNA ligase alpha subunit from Thermotoga petrophila (strain ATCC BAA-488 / DSM 13995 / JCM 10881 / RKU-1).